Reading from the N-terminus, the 165-residue chain is Peptide deformylase (165 aa).

Fe cation is bound by residues cysteine 93 and histidine 135. Residue glutamate 136 is part of the active site. Residue histidine 139 participates in Fe cation binding.

The protein belongs to the polypeptide deformylase family. Fe(2+) serves as cofactor.

It carries out the reaction N-terminal N-formyl-L-methionyl-[peptide] + H2O = N-terminal L-methionyl-[peptide] + formate. Removes the formyl group from the N-terminal Met of newly synthesized proteins. Requires at least a dipeptide for an efficient rate of reaction. N-terminal L-methionine is a prerequisite for activity but the enzyme has broad specificity at other positions. The chain is Peptide deformylase from Thermodesulfovibrio yellowstonii (strain ATCC 51303 / DSM 11347 / YP87).